The sequence spans 298 residues: Protoheme IX farnesyltransferase (298 aa).

9 helical membrane passes run 19 to 39, 40 to 60, 91 to 111, 112 to 132, 140 to 160, 167 to 187, 213 to 233, 236 to 256, and 277 to 297; these read VMSLVVFTAFVGLWIAPQPVN, PFVAFCAVLFIALGGGASGAL, LAVGIALSGLSVMMLGAGGNW, FAAGFLAFTIFFYAVVYTIWL, IVIGGAAGAFPPMIGWALPTG, LLMFALIFFWTPPHFWALALF, IFAYTLVLAPFALWLGFTSVG, LYLAVSVVLNALFIAGGWQIL, and LSLYYTFLHFLALLVQHWVGG.

The protein belongs to the UbiA prenyltransferase family. Protoheme IX farnesyltransferase subfamily. As to quaternary structure, interacts with CtaA.

The protein resides in the cell inner membrane. It carries out the reaction heme b + (2E,6E)-farnesyl diphosphate + H2O = Fe(II)-heme o + diphosphate. It participates in porphyrin-containing compound metabolism; heme O biosynthesis; heme O from protoheme: step 1/1. Its function is as follows. Converts heme B (protoheme IX) to heme O by substitution of the vinyl group on carbon 2 of heme B porphyrin ring with a hydroxyethyl farnesyl side group. The protein is Protoheme IX farnesyltransferase of Paracoccus denitrificans.